The sequence spans 300 residues: Bifunctional protein FolD 2 (300 aa).

NADP(+) contacts are provided by residues 166–168 (GRS), Ser-191, and Ile-232.

This sequence belongs to the tetrahydrofolate dehydrogenase/cyclohydrolase family. In terms of assembly, homodimer.

It carries out the reaction (6R)-5,10-methylene-5,6,7,8-tetrahydrofolate + NADP(+) = (6R)-5,10-methenyltetrahydrofolate + NADPH. The catalysed reaction is (6R)-5,10-methenyltetrahydrofolate + H2O = (6R)-10-formyltetrahydrofolate + H(+). Its pathway is one-carbon metabolism; tetrahydrofolate interconversion. In terms of biological role, catalyzes the oxidation of 5,10-methylenetetrahydrofolate to 5,10-methenyltetrahydrofolate and then the hydrolysis of 5,10-methenyltetrahydrofolate to 10-formyltetrahydrofolate. This is Bifunctional protein FolD 2 from Roseobacter denitrificans (strain ATCC 33942 / OCh 114) (Erythrobacter sp. (strain OCh 114)).